We begin with the raw amino-acid sequence, 180 residues long: uncharacterized protein (180 aa).

Positions 1–21 (MKQCIAFMAILALSLSAISEA) are cleaved as a signal peptide. The disordered stretch occupies residues 23-81 (GGRGVRSSGYSRPVATKPAPAPKQTQTQQQSQQPDATFGQQNMQNTATNTPNNPNNRLA). Positions 27 to 78 (VRSSGYSRPVATKPAPAPKQTQTQQQSQQPDATFGQQNMQNTATNTPNNPNN) are enriched in low complexity.

This is an uncharacterized protein from Pasteurella multocida (strain Pm70).